Consider the following 57-residue polypeptide: Ribosome modulation factor 1 (57 aa).

The span at 1–14 (MKRQKRDRQSRAHT) shows a compositional bias: basic residues. A disordered region spans residues 1–24 (MKRQKRDRQSRAHTRGYQAGISGR).

It belongs to the ribosome modulation factor family.

The protein resides in the cytoplasm. Its function is as follows. During stationary phase, converts 70S ribosomes to an inactive dimeric form (100S ribosomes). This is Ribosome modulation factor 1 from Colwellia psychrerythraea (strain 34H / ATCC BAA-681) (Vibrio psychroerythus).